Reading from the N-terminus, the 763-residue chain is Phosphoglycerol transferase I (763 aa).

Transmembrane regions (helical) follow at residues 1–21 (MSELLSFALFLASVLIYAWKA), 26–46 (WWFAATLTVLGLFVVLNITLF), 77–97 (ILPGIGIVLGLTAVFGALGWI), and 108–128 (FGYSLLALLLALGSVDASPAF).

This sequence belongs to the OpgB family.

Its subcellular location is the cell inner membrane. It carries out the reaction a phosphatidylglycerol + a membrane-derived-oligosaccharide D-glucose = a 1,2-diacyl-sn-glycerol + a membrane-derived-oligosaccharide 6-(glycerophospho)-D-glucose.. The protein operates within glycan metabolism; osmoregulated periplasmic glucan (OPG) biosynthesis. Transfers a phosphoglycerol residue from phosphatidylglycerol to the membrane-bound nascent glucan backbones. This is Phosphoglycerol transferase I from Escherichia coli O127:H6 (strain E2348/69 / EPEC).